A 493-amino-acid chain; its full sequence is Glycerol kinase (493 aa).

Thr-11 is a binding site for ADP. ATP contacts are provided by Thr-11, Thr-12, and Ser-13. A sn-glycerol 3-phosphate-binding site is contributed by Thr-11. Arg-15 contacts ADP. Residues Arg-80, Glu-81, Tyr-132, and Asp-241 each coordinate sn-glycerol 3-phosphate. 5 residues coordinate glycerol: Arg-80, Glu-81, Tyr-132, Asp-241, and Gln-242. Positions 263 and 306 each coordinate ADP. ATP contacts are provided by Thr-263, Gly-306, Gln-310, and Gly-408. Gly-408 provides a ligand contact to ADP.

This sequence belongs to the FGGY kinase family.

The catalysed reaction is glycerol + ATP = sn-glycerol 3-phosphate + ADP + H(+). Its pathway is polyol metabolism; glycerol degradation via glycerol kinase pathway; sn-glycerol 3-phosphate from glycerol: step 1/1. Its activity is regulated as follows. Inhibited by fructose 1,6-bisphosphate (FBP). Its function is as follows. Key enzyme in the regulation of glycerol uptake and metabolism. Catalyzes the phosphorylation of glycerol to yield sn-glycerol 3-phosphate. The sequence is that of Glycerol kinase from Cereibacter sphaeroides (strain ATCC 17025 / ATH 2.4.3) (Rhodobacter sphaeroides).